The sequence spans 426 residues: Dihydroorotase (426 aa).

Residues histidine 58 and histidine 60 each contribute to the Zn(2+) site. Residues 60-62 (HLR) and asparagine 92 each bind substrate. Aspartate 150, histidine 177, and histidine 230 together coordinate Zn(2+). Position 276 (asparagine 276) interacts with substrate. Aspartate 303 is a binding site for Zn(2+). Aspartate 303 is an active-site residue. Residues histidine 307 and 321–322 (FG) each bind substrate.

This sequence belongs to the metallo-dependent hydrolases superfamily. DHOase family. Class I DHOase subfamily. It depends on Zn(2+) as a cofactor.

It carries out the reaction (S)-dihydroorotate + H2O = N-carbamoyl-L-aspartate + H(+). The protein operates within pyrimidine metabolism; UMP biosynthesis via de novo pathway; (S)-dihydroorotate from bicarbonate: step 3/3. Its function is as follows. Catalyzes the reversible cyclization of carbamoyl aspartate to dihydroorotate. The sequence is that of Dihydroorotase from Listeria monocytogenes serotype 4a (strain HCC23).